Here is a 344-residue protein sequence, read N- to C-terminus: tRNA N6-adenosine threonylcarbamoyltransferase (344 aa).

Fe cation-binding residues include H112 and H116. Substrate contacts are provided by residues 134–138, D167, G180, and N280; that span reads LASGG. A Fe cation-binding site is contributed by D308.

This sequence belongs to the KAE1 / TsaD family. Fe(2+) serves as cofactor.

It localises to the cytoplasm. The catalysed reaction is L-threonylcarbamoyladenylate + adenosine(37) in tRNA = N(6)-L-threonylcarbamoyladenosine(37) in tRNA + AMP + H(+). Functionally, required for the formation of a threonylcarbamoyl group on adenosine at position 37 (t(6)A37) in tRNAs that read codons beginning with adenine. Is involved in the transfer of the threonylcarbamoyl moiety of threonylcarbamoyl-AMP (TC-AMP) to the N6 group of A37, together with TsaE and TsaB. TsaD likely plays a direct catalytic role in this reaction. The protein is tRNA N6-adenosine threonylcarbamoyltransferase of Rickettsia conorii (strain ATCC VR-613 / Malish 7).